Here is a 280-residue protein sequence, read N- to C-terminus: MIQTLTDLSALRALVNGWKREGLRVALVPTMGNLHAGHYSLVMLARQYADRVVSSVFVNPTQFGPNEDFARYPRTPEADLRGLEDAGCDALWLPDVDTMYPLGTALATPIHAPGVSDVLEGECRPGHFDGVCTVVARLFNQVQPDVAAFGKKDYQQLAVIRQMVADLAFPIEILGGSIVREADGLAMSSRNQYLSAEDRPISATIRKVLLQMRDSYAAGTPRAQVEDAASQALEQAGFRVDYAVVRLPDLSEPGDSYTGARVALIAARLGNTRLIDNLEF.

31–38 is an ATP binding site; the sequence is MGNLHAGH. Histidine 38 functions as the Proton donor in the catalytic mechanism. Glutamine 62 contributes to the (R)-pantoate binding site. A beta-alanine-binding site is contributed by glutamine 62. Residue 150–153 participates in ATP binding; the sequence is GKKD. Glutamine 156 contacts (R)-pantoate. ATP contacts are provided by residues valine 179 and 187-190; that span reads MSSR.

It belongs to the pantothenate synthetase family. In terms of assembly, homodimer.

It localises to the cytoplasm. It catalyses the reaction (R)-pantoate + beta-alanine + ATP = (R)-pantothenate + AMP + diphosphate + H(+). The protein operates within cofactor biosynthesis; (R)-pantothenate biosynthesis; (R)-pantothenate from (R)-pantoate and beta-alanine: step 1/1. Its function is as follows. Catalyzes the condensation of pantoate with beta-alanine in an ATP-dependent reaction via a pantoyl-adenylate intermediate. This Xanthomonas euvesicatoria pv. vesicatoria (strain 85-10) (Xanthomonas campestris pv. vesicatoria) protein is Pantothenate synthetase.